The primary structure comprises 397 residues: MTATDPVANLQTLIRCPSVTPAEGGALSALEAMLAPLGFTVDRVKASEEGTPDIENLYARLGTDGPHLMFAGHTDVVPVGDEAAWTHPPFAAEISKGELFGRGAVDMKGGIACFVAAVARHIEKSGQPKGSISFLITGDEEGPAINGTIKLLQWAAERGERWDACLVGEPTNPDRLGDMIKIGRRGSLSGKITVHGVQGHAAYPHLADNPVRGMLQMTHALMDPPFDGGTDDFQPSNLEVTTVDVGNPATNVIPAKASASFNIRFNDSWTVETLRAEILRRLDAAAGNGELRPGRDPVKYDIVWADRPSHVFLTRNNALIASLSSAVESVSGQSPKLSTTGGTSDARFIKDYCPVVEFGLVGQTMHMVDERVAVADLETLTAIYETFIARWFANAGL.

His73 is a Zn(2+) binding site. Asp75 is a catalytic residue. Asp106 provides a ligand contact to Zn(2+). Catalysis depends on Glu140, which acts as the Proton acceptor. Zn(2+) is bound by residues Glu141, Glu169, and His366.

The protein belongs to the peptidase M20A family. DapE subfamily. Homodimer. Zn(2+) is required as a cofactor. It depends on Co(2+) as a cofactor.

The enzyme catalyses N-succinyl-(2S,6S)-2,6-diaminopimelate + H2O = (2S,6S)-2,6-diaminopimelate + succinate. Its pathway is amino-acid biosynthesis; L-lysine biosynthesis via DAP pathway; LL-2,6-diaminopimelate from (S)-tetrahydrodipicolinate (succinylase route): step 3/3. Functionally, catalyzes the hydrolysis of N-succinyl-L,L-diaminopimelic acid (SDAP), forming succinate and LL-2,6-diaminopimelate (DAP), an intermediate involved in the bacterial biosynthesis of lysine and meso-diaminopimelic acid, an essential component of bacterial cell walls. This chain is Succinyl-diaminopimelate desuccinylase, found in Rhizobium johnstonii (strain DSM 114642 / LMG 32736 / 3841) (Rhizobium leguminosarum bv. viciae).